A 113-amino-acid polypeptide reads, in one-letter code: Histidine triad nucleotide-binding protein (113 aa).

Zn(2+)-binding residues include C5 and C8. Positions 6 to 113 (IFCKIAQKQI…GGKKLAWDKL (108 aa)) constitute an HIT domain. An AMP-binding site is contributed by D31. Zn(2+) is bound at residue H47. AMP-binding residues include N86, G92, and T94. H97 contributes to the Zn(2+) binding site. The Histidine triad motif motif lies at 97–101 (HIHFH). AMP is bound by residues H99 and H101. The active-site Tele-AMP-histidine intermediate is the H99.

This sequence belongs to the HINT family.

It localises to the nucleus. It is found in the cytoplasm. The catalysed reaction is adenosine 5'-phosphoramidate + H2O = AMP + NH4(+). Functionally, hydrolyzes purine nucleotide phosphoramidates with a single phosphate group, including adenosine 5'monophosphoramidate (AMP-NH2), adenosine 5'monophosphomorpholidate (AMP-morpholidate) and guanosine 5'monophosphomorpholidate (GMP-morpholidate). Hydrolyzes lysyl-AMP (AMP-N-epsilon-(N-alpha-acetyl lysine methyl ester)) generated by lysine tRNA ligase, as well as Met-AMP, His-AMP and Asp-AMP, lysyl-GMP (GMP-N-epsilon-(N-alpha-acetyl lysine methyl ester)) and AMP-N-alanine methyl ester. May also function as scaffolding protein that mediates protein-protein interactions. This Entamoeba histolytica (strain ATCC 30459 / HM-1:IMSS / ABRM) protein is Histidine triad nucleotide-binding protein.